The primary structure comprises 481 residues: UDP-glycosyltransferase 72B3 (481 aa).

UDP-alpha-D-glucose-binding positions include serine 277, 347 to 349 (APQ), 364 to 372 (HCGWNSSLE), and 386 to 389 (YAEQ).

The protein belongs to the UDP-glycosyltransferase family.

Its function is as follows. Possesses low quercetin 3-O-glucosyltransferase activity in vitro. The chain is UDP-glycosyltransferase 72B3 (UGT72B3) from Arabidopsis thaliana (Mouse-ear cress).